A 21-amino-acid chain; its full sequence is Antimicrobial peptide scolopin-1 (21 aa).

As to expression, expressed by the venom gland.

The protein resides in the secreted. Functionally, antimicrobial peptide against both Gram-positive, -negative and yeast. Also induces histamine release by mast cells and shows moderate hemolytic activities against both human and rabbit red cells. The chain is Antimicrobial peptide scolopin-1 from Scolopendra mutilans (Chinese red-headed centipede).